The primary structure comprises 906 residues: Protein translocase subunit SecA (906 aa).

Residues Q86, 104-108 (GEGKT), and D511 each bind ATP. Composition is skewed to basic and acidic residues over residues 853-865 (HESVIDNNQRHDE) and 877-888 (VRREGPKVKRND). The segment at 853–906 (HESVIDNNQRHDEDEQEEAPKVQQVRREGPKVKRNDPCPCGSGKKYKQCHSKVE) is disordered. Zn(2+)-binding residues include C890, C892, C901, and H902. Basic residues predominate over residues 896–906 (KKYKQCHSKVE).

The protein belongs to the SecA family. In terms of assembly, monomer and homodimer. Part of the essential Sec protein translocation apparatus which comprises SecA, SecYEG and auxiliary proteins SecDF-YajC and YidC. Zn(2+) serves as cofactor.

It localises to the cell inner membrane. The protein resides in the cytoplasm. The catalysed reaction is ATP + H2O + cellular proteinSide 1 = ADP + phosphate + cellular proteinSide 2.. In terms of biological role, part of the Sec protein translocase complex. Interacts with the SecYEG preprotein conducting channel. Has a central role in coupling the hydrolysis of ATP to the transfer of proteins into and across the cell membrane, serving both as a receptor for the preprotein-SecB complex and as an ATP-driven molecular motor driving the stepwise translocation of polypeptide chains across the membrane. The sequence is that of Protein translocase subunit SecA from Francisella tularensis subsp. mediasiatica (strain FSC147).